Here is a 402-residue protein sequence, read N- to C-terminus: LIM homeobox transcription factor 1-beta (402 aa).

LIM zinc-binding domains lie at 56 to 106 and 115 to 168; these read CEGC…CKQD and CSGC…CKGD. Disordered regions lie at residues 176–229 and 326–346; these read LSSV…LTTQ and PYGSSDPFQQGLTPPQMPGDH. The segment at residues 219–278 is a DNA-binding region (homeobox); it reads PKRPRTILTTQQRRAFKASFEVSSKPCRKVRETLAAETGLSVRVVQVWFQNQRAKMKKLA. Residues 326–338 show a composition bias toward polar residues; that stretch reads PYGSSDPFQQGLT.

In terms of assembly, interacts with DHX9. As to expression, expressed in most tissues. Highest levels in testis, thyroid, duodenum, skeletal muscle, and pancreatic islets.

The protein localises to the nucleus. Functionally, transcription factor involved in the regulation of podocyte-expressed genes. Essential for the specification of dorsal limb fate at both the zeugopodal and autopodal levels. The protein is LIM homeobox transcription factor 1-beta (LMX1B) of Homo sapiens (Human).